We begin with the raw amino-acid sequence, 312 residues long: Phospholipid phosphatase 3 (312 aa).

The Cytoplasmic portion of the chain corresponds to 1 to 33; it reads MQSYKYDKAIVPESKNGGSPALNNNPRKGGSKR. A Phosphoserine modification is found at S19. Residues 34–54 traverse the membrane as a helical segment; that stretch reads VLLICLDLFCLFMAALPFLII. Over 55–85 the chain is Extracellular; that stretch reads ETSTIKPYRRGFYCNDESIKYPLKVSETIND. The helical transmembrane segment at 86–106 threads the bilayer; the sequence is AVLCAVGIVIAILRIITGEFY. Residues 107–123 lie on the Cytoplasmic side of the membrane; it reads RIYYLKEKSRSTIQNPY. The Dityrosine basolateral targeting motif signature appears at 109–110; the sequence is YY. Residues 124–144 form a helical membrane-spanning segment; it reads VAALYKQVGCFLFGCAISQSF. Residues 145-194 lie on the Extracellular side of the membrane; sequence TDIAKVSIGRLRPHFLSVCDPDFSQINCSEGYIQNYRCRGEDSKVQEARK. The phosphatase sequence motif I stretch occupies residues 149–157; it reads KVSIGRLRP. The N-linked (GlcNAc...) asparagine glycan is linked to N171. Positions 183 to 185 match the Integrin-binding motif motif; the sequence is RGE. A helical membrane pass occupies residues 195–215; it reads SFFSGHASFSMFTMLYLVLYL. The interval 197–200 is phosphatase sequence motif II; it reads FSGH. Catalysis depends on H200, which acts as the Proton donors. The Cytoplasmic segment spans residues 216-226; the sequence is QARFTWRGARL. Residues 227 to 244 traverse the membrane as a helical segment; the sequence is LRPLLQFTLLMMAFYTGL. The tract at residues 245–256 is phosphatase sequence motif III; it reads SRVSDYKHHPSD. The Extracellular portion of the chain corresponds to 245–258; that stretch reads SRVSDYKHHPSDVL. H252 acts as the Nucleophile in catalysis. The chain crosses the membrane as a helical span at residues 259 to 279; it reads AGFAQGALVACCIVFFVSDLF. The tract at residues 276–312 is mediates interaction with CTNND1; it reads SDLFKTKTTLSLPAPAIRREILSPVDIMDRSNHHNMV. Over 280–312 the chain is Cytoplasmic; the sequence is KTKTTLSLPAPAIRREILSPVDIMDRSNHHNMV.

Belongs to the PA-phosphatase related phosphoesterase family. In terms of assembly, forms functional homodimers and homooligomers that are not required for substrate recognition and catalytic activity. Can also form heterooligomers with other PLPP2 and PLPP3. Interacts with CTNND1; negatively regulates the PLPP3-mediated stabilization of beta-catenin/CTNNB1. N-glycosylated. Contains high-mannose oligosaccharides. In terms of tissue distribution, detected in epithelial cells of intestinal mucosa, lung, liver and brain.

The protein localises to the cell membrane. It is found in the basolateral cell membrane. Its subcellular location is the endoplasmic reticulum membrane. It localises to the endoplasmic reticulum-Golgi intermediate compartment membrane. The protein resides in the golgi apparatus membrane. The protein localises to the golgi apparatus. It is found in the trans-Golgi network membrane. Its subcellular location is the membrane raft. It carries out the reaction a 1,2-diacyl-sn-glycero-3-phosphate + H2O = a 1,2-diacyl-sn-glycerol + phosphate. The enzyme catalyses 1,2-dihexadecanoyl-sn-glycero-3-phosphate + H2O = 1,2-dihexadecanoyl-sn-glycerol + phosphate. It catalyses the reaction 1,2-di-(9Z-octadecenoyl)-sn-glycero-3-phosphate + H2O = 1,2-di-(9Z-octadecenoyl)-sn-glycerol + phosphate. The catalysed reaction is a monoacyl-sn-glycero-3-phosphate + H2O = a monoacylglycerol + phosphate. It carries out the reaction (9Z)-octadecenoyl-sn-glycero-3-phosphate + H2O = (9Z-octadecenoyl)-glycerol + phosphate. The enzyme catalyses sphing-4-enine 1-phosphate + H2O = sphing-4-enine + phosphate. It catalyses the reaction an N-acylsphing-4-enine 1-phosphate + H2O = an N-acylsphing-4-enine + phosphate. The catalysed reaction is N-(octanoyl)-sphing-4-enine-1-phosphate + H2O = N-octanoylsphing-4-enine + phosphate. It carries out the reaction N-(9Z-octadecenoyl)-ethanolamine phosphate + H2O = N-(9Z-octadecenoyl) ethanolamine + phosphate. It participates in lipid metabolism; phospholipid metabolism. Its activity is regulated as follows. Magnesium-independent phospholipid phosphatase. Insensitive to N-ethylmaleimide. Inhibited by sphingosine, zinc ions and modestly by propanolol. Functionally, magnesium-independent phospholipid phosphatase of the plasma membrane that catalyzes the dephosphorylation of a variety of glycerolipid and sphingolipid phosphate esters including phosphatidate/PA, lysophosphatidate/LPA, diacylglycerol pyrophosphate/DGPP, sphingosine 1-phosphate/S1P and ceramide 1-phosphate/C1P. Also acts on N-oleoyl ethanolamine phosphate/N-(9Z-octadecenoyl)-ethanolamine phosphate, a potential physiological compound. Has both an extracellular and an intracellular phosphatase activity, allowing the hydrolysis and the cellular uptake of these bioactive lipid mediators from the milieu, regulating signal transduction in different cellular processes. Through the dephosphorylation of extracellular sphingosine-1-phosphate and the regulation of its extra- and intracellular availability, plays a role in vascular homeostasis, regulating endothelial cell migration, adhesion, survival, proliferation and the production of pro-inflammatory cytokines. By maintaining the appropriate levels of this lipid in the cerebellum, also ensure its proper development and function. Through its intracellular lipid phosphatase activity may act in early compartments of the secretory pathway, regulating the formation of Golgi to endoplasmic reticulum retrograde transport carriers. Independently of this phosphatase activity may also function in the Wnt signaling pathway and the stabilization of beta-catenin/CTNNB1, thereby regulating cell proliferation, migration and differentiation in angiogenesis or yet in tumor growth. Also plays a role in integrin-mediated cell-cell adhesion in angiogenesis. The protein is Phospholipid phosphatase 3 of Rattus norvegicus (Rat).